Consider the following 128-residue polypeptide: Large ribosomal subunit protein bL12 (128 aa).

Belongs to the bacterial ribosomal protein bL12 family. In terms of assembly, homodimer. Part of the ribosomal stalk of the 50S ribosomal subunit. Forms a multimeric L10(L12)X complex, where L10 forms an elongated spine to which 2 to 4 L12 dimers bind in a sequential fashion. Binds GTP-bound translation factors.

Functionally, forms part of the ribosomal stalk which helps the ribosome interact with GTP-bound translation factors. Is thus essential for accurate translation. The protein is Large ribosomal subunit protein bL12 of Kineococcus radiotolerans (strain ATCC BAA-149 / DSM 14245 / SRS30216).